A 543-amino-acid polypeptide reads, in one-letter code: Reticulophagy regulator 2 (543 aa).

The next 3 helical transmembrane spans lie at 12-32, 100-120, and 204-224; these read AGGG…SLGM, SLRP…LDLW, and VPGI…PLVV. The segment covering 254-265 has biased composition (basic residues); that stretch reads LHHKHDKRKRQG. Residues 254-287 are disordered; sequence LHHKHDKRKRQGKNAPPGGDEPLAETESESEAEL. Acidic residues predominate over residues 275 to 285; it reads PLAETESESEA. At Thr-279 the chain carries Phosphothreonine. Ser-281, Ser-283, Ser-291, and Ser-311 each carry phosphoserine. Phosphothreonine is present on Thr-334. 2 disordered regions span residues 336-394 and 411-486; these read VSED…DVAA and HFNG…EEEA. Residues Ser-337, Ser-344, Ser-347, and Ser-385 each carry the phosphoserine modification. Residues 461 to 480 show a composition bias toward pro residues; sequence APSPSILPPVPQDSPQPLPA. The LIR motif signature appears at 490-495; the sequence is EDFELL. The tract at residues 504–543 is disordered; that stretch reads NAELGLEPETPPKPPDAPPLGPDIHSLVQSDQEAQAVAEP. A compositionally biased stretch (pro residues) spans 512-524; it reads ETPPKPPDAPPLG.

It belongs to the RETREG family. In terms of assembly, interacts with ATG8 family modifier proteins MAP1LC3A, MAP1LC3B, MAP1LC3C, GABARAP, GABARAPL1 and GABARAPL2. Shows higher affinity for GABARAPL1 than for MAP1LC3B. Interacts with CANX.

The protein localises to the endoplasmic reticulum membrane. Its function is as follows. Endoplasmic reticulum (ER)-anchored autophagy regulator which exists in an inactive state under basal conditions but is activated following cellular stress. When activated, induces ER fragmentation and mediates ER delivery into lysosomes through sequestration into autophagosomes via interaction with ATG8 family proteins. Required for collagen quality control in a LIR motif-independent manner. The chain is Reticulophagy regulator 2 from Homo sapiens (Human).